The following is a 93-amino-acid chain: Protein F-93 (93 aa).

As to quaternary structure, homodimer.

Probable transcription factor that recognizes a (pseudo-)palindromic DNA target sequence. The protein is Protein F-93 of Saccharolobus solfataricus (Sulfolobus solfataricus).